A 1134-amino-acid polypeptide reads, in one-letter code: Error-prone DNA polymerase (1134 aa).

The segment at 1–33 (MSYHNPPIPWRELEGRISGRPAPHGHQESHADQ) is disordered.

It belongs to the DNA polymerase type-C family. DnaE2 subfamily.

It is found in the cytoplasm. It carries out the reaction DNA(n) + a 2'-deoxyribonucleoside 5'-triphosphate = DNA(n+1) + diphosphate. In terms of biological role, DNA polymerase involved in damage-induced mutagenesis and translesion synthesis (TLS). It is not the major replicative DNA polymerase. This Cutibacterium acnes (strain DSM 16379 / KPA171202) (Propionibacterium acnes) protein is Error-prone DNA polymerase.